A 255-amino-acid polypeptide reads, in one-letter code: Putative cysteine-rich repeat secretory protein 32 (255 aa).

Positions 1 to 28 are cleaved as a signal peptide; that stretch reads MYSSYSLFKCLVCFYILGIQVLIHSVSS. Gnk2-homologous domains lie at 35–136 and 143–252; these read YLHH…TINS and YENT…LYPF.

It belongs to the cysteine-rich repeat secretory protein family.

The protein localises to the secreted. The chain is Putative cysteine-rich repeat secretory protein 32 (CRRSP32) from Arabidopsis thaliana (Mouse-ear cress).